Consider the following 570-residue polypeptide: Sulfite reductase [NADPH] hemoprotein beta-component (570 aa).

4 residues coordinate [4Fe-4S] cluster: cysteine 434, cysteine 440, cysteine 479, and cysteine 483. Cysteine 483 provides a ligand contact to siroheme.

This sequence belongs to the nitrite and sulfite reductase 4Fe-4S domain family. In terms of assembly, alpha(8)-beta(8). The alpha component is a flavoprotein, the beta component is a hemoprotein. Siroheme is required as a cofactor. The cofactor is [4Fe-4S] cluster.

The catalysed reaction is hydrogen sulfide + 3 NADP(+) + 3 H2O = sulfite + 3 NADPH + 4 H(+). Its pathway is sulfur metabolism; hydrogen sulfide biosynthesis; hydrogen sulfide from sulfite (NADPH route): step 1/1. Its function is as follows. Component of the sulfite reductase complex that catalyzes the 6-electron reduction of sulfite to sulfide. This is one of several activities required for the biosynthesis of L-cysteine from sulfate. This is Sulfite reductase [NADPH] hemoprotein beta-component from Escherichia coli (strain ATCC 8739 / DSM 1576 / NBRC 3972 / NCIMB 8545 / WDCM 00012 / Crooks).